We begin with the raw amino-acid sequence, 522 residues long: MSFSRSAADAADTLPDLAATLGEPAVGAFVTLGDAFHTRLPAAPLAAPYVVGFSGEVAQLLDLPPSIAAQPGFAELFAGNPTRDWPANAMPYASVYSGHQFGVWAGQLGDGRALTIGERTGTDGRRYELQLKGSGRTPYSRMGDGRAVLRSSIREFLCSEAMHHLGIPTTRALTVIGSDQPVVREEIETSAVVTRVSESFVRFGHFEHFFSNDRPDLLRQLADHVIDRFYPECRRADDPYLALLEAATLRTADLVAQWQAVGFCHGVMNTDNMSILGVTIDYGPFGFVDAFDANHICNHSDTSGRYAYRMQPRIAHWNCYCLAQALLPLIGLQHGIDDDDARAERAVEDAQAVLAKFPERFGPALERAMRAKLGLELERESDAELANKLLETMHASHADFTLTFRRLAQISKHDASRDAPVRDLFIDRDAFDAWANLYRARLSEETRDDAARAAAMNRVNPKYVLRNHLAEVAIRRAKEKDFSEVERLAQILRRPFDEQPEHEAYAALPPDWAGSLEVSCSS.

ATP contacts are provided by G109, G111, R112, K132, D144, G145, R195, and R202. D271 (proton acceptor) is an active-site residue. Mg(2+) is bound by residues N272 and D281. D281 provides a ligand contact to ATP.

This sequence belongs to the SELO family. It depends on Mg(2+) as a cofactor. Requires Mn(2+) as cofactor.

It carries out the reaction L-seryl-[protein] + ATP = 3-O-(5'-adenylyl)-L-seryl-[protein] + diphosphate. The catalysed reaction is L-threonyl-[protein] + ATP = 3-O-(5'-adenylyl)-L-threonyl-[protein] + diphosphate. It catalyses the reaction L-tyrosyl-[protein] + ATP = O-(5'-adenylyl)-L-tyrosyl-[protein] + diphosphate. The enzyme catalyses L-histidyl-[protein] + UTP = N(tele)-(5'-uridylyl)-L-histidyl-[protein] + diphosphate. It carries out the reaction L-seryl-[protein] + UTP = O-(5'-uridylyl)-L-seryl-[protein] + diphosphate. The catalysed reaction is L-tyrosyl-[protein] + UTP = O-(5'-uridylyl)-L-tyrosyl-[protein] + diphosphate. In terms of biological role, nucleotidyltransferase involved in the post-translational modification of proteins. It can catalyze the addition of adenosine monophosphate (AMP) or uridine monophosphate (UMP) to a protein, resulting in modifications known as AMPylation and UMPylation. In Burkholderia lata (strain ATCC 17760 / DSM 23089 / LMG 22485 / NCIMB 9086 / R18194 / 383), this protein is Protein nucleotidyltransferase YdiU.